Reading from the N-terminus, the 1299-residue chain is MVDDIQVEKREKLIETKDKLLEEKLSALDPHEANVLRSQLETKRVATSFFRLFRFCTPLDVFLEILALFFAAVHGAALPMFTLVVGAIFNTFRDFTSYDLKGNEFQHKVNHLSLYFVYIGIGMLGSAFLESFLLVDRGEVLAGRYRKHYLSAVIRQNIAFYDKLGGGEVSTRIINDTNSIQEAISDKLGNVVQGIASFIAATVISFASQWKLACILLSAVGFMVITMGTGATFMAKYQLRSDAIYSQSGATVAEEALSAVRTTVAFGAQPHLAVKYEKVLDRVVKESKRSSYSLGVMLACIWASTFWVYALALWQGSREIVSGSADVGKIIVVITAMLLGSFQLGNIAPNVRFLVKGLTAASILNEAIDRVPVIDGQSIDKGIVPQTKAVGRIELKNVKFRYPSRPDVLVLSDFSLEVPAGSTVALVGASGSGKSTIVGILERFYLPLEGSVTLDGQEISDLNTRWLRQQIGYVQQEPVLFSESIYENISYGLIGTDIEFADEHVKEAKIIQACKDANAWDFIQTLSEGIQTNVGDRGFLLSGGQKQRIAIARAIVSDPKILLLDEATSALDTKSEGIVQDALDKAAEGRTTIVVAHRLSTIKDANKIVVMSKGNVIEQGTHNELIQREGPYKALVDAQRVTKAKSTNVEVLDIEALDISPLDSLNEKFNPKDVSTLSVHSAGTQTTQPPEYQENDIPGVRNPPHSTLMTNTKLVWGLNRKEWGYILIGSLASIILGYCYPAMAIITGQTTGSMVLPPSEYGKMRHVVNIMGWWYFFVGCISFMTAFITIAALSLASDKLVKNIRLALFRQLMRMDIAFFDHKNNTPGALTSILAKEAKMIEGLSGATLGQIQQSLVTLIGGIVTGIPFNWRIGLVATSVVPVMLVCGFVRVWVLTQLSDRAREVYERSGSMASEYTSAVRTVQSLTRELDVVVKYTKTVDSQIFSSRIAIARSALYYALSEGMTPWVVALVFWWGSTVMRRGEASVAGYMTVFMAIITGSQAAGQIFSYAPNMNSAKDAARNIYRILTATPSIDVWSEEGYVAPEESVRGDIEFRHVNFRYPTRPQVPVLQDLNLTVKKGQYIALVGASGCGKSTTIGLVERFYDPLAGQVLFDGKDLREYNLNALRSHIALVQQEPMLYSGTLRENILMGWSGPESEVTQEMIEDAARKANIHEFIMSLPDGYETLSGSRGSLLSGGQKQRIAIARALIRNPKVLLLDEATSALDSESEKVVQAALDAAAKGRTTIAVAHRLSTIQKADVIYVFSGGRIVEQGDHQSLLELNGWYAELVNLQGLGEI.

At 1–64 (MVDDIQVEKR…FCTPLDVFLE (64 aa)) the chain is on the cytoplasmic side. The helical transmembrane segment at 65-85 (ILALFFAAVHGAALPMFTLVV) threads the bilayer. Residues 65–356 (ILALFFAAVH…IAPNVRFLVK (292 aa)) form the ABC transmembrane type-1 1 domain. At 86-114 (GAIFNTFRDFTSYDLKGNEFQHKVNHLSL) the chain is on the extracellular side. Residues 115–135 (YFVYIGIGMLGSAFLESFLLV) traverse the membrane as a helical segment. Residues 136 to 187 (DRGEVLAGRYRKHYLSAVIRQNIAFYDKLGGGEVSTRIINDTNSIQEAISDK) are Cytoplasmic-facing. A helical transmembrane segment spans residues 188–208 (LGNVVQGIASFIAATVISFAS). Topologically, residues 209–214 (QWKLAC) are extracellular. The chain crosses the membrane as a helical span at residues 215-235 (ILLSAVGFMVITMGTGATFMA). Residues 236–293 (KYQLRSDAIYSQSGATVAEEALSAVRTTVAFGAQPHLAVKYEKVLDRVVKESKRSSYS) lie on the Cytoplasmic side of the membrane. Residues 294–314 (LGVMLACIWASTFWVYALALW) traverse the membrane as a helical segment. The Extracellular portion of the chain corresponds to 315-326 (QGSREIVSGSAD). The chain crosses the membrane as a helical span at residues 327-347 (VGKIIVVITAMLLGSFQLGNI). The Cytoplasmic segment spans residues 348–725 (APNVRFLVKG…WGLNRKEWGY (378 aa)). One can recognise an ABC transporter 1 domain in the interval 393 to 638 (IELKNVKFRY…EGPYKALVDA (246 aa)). Residue 428–435 (GASGSGKS) coordinates ATP. Residues 681-690 (SAGTQTTQPP) are compositionally biased toward polar residues. Residues 681–703 (SAGTQTTQPPEYQENDIPGVRNP) are disordered. The helical transmembrane segment at 726-746 (ILIGSLASIILGYCYPAMAII) threads the bilayer. The ABC transmembrane type-1 2 domain occupies 727–1016 (LIGSLASIIL…IFSYAPNMNS (290 aa)). The Extracellular segment spans residues 747 to 769 (TGQTTGSMVLPPSEYGKMRHVVN). Residues 770–790 (IMGWWYFFVGCISFMTAFITI) traverse the membrane as a helical segment. At 791 to 848 (AALSLASDKLVKNIRLALFRQLMRMDIAFFDHKNNTPGALTSILAKEAKMIEGLSGAT) the chain is on the cytoplasmic side. A helical membrane pass occupies residues 849 to 869 (LGQIQQSLVTLIGGIVTGIPF). Residues 870 to 874 (NWRIG) lie on the Extracellular side of the membrane. A helical transmembrane segment spans residues 875 to 895 (LVATSVVPVMLVCGFVRVWVL). At 896–954 (TQLSDRAREVYERSGSMASEYTSAVRTVQSLTRELDVVVKYTKTVDSQIFSSRIAIARS) the chain is on the cytoplasmic side. Residues 955–975 (ALYYALSEGMTPWVVALVFWW) form a helical membrane-spanning segment. Residues 976 to 987 (GSTVMRRGEASV) are Extracellular-facing. The helical transmembrane segment at 988–1008 (AGYMTVFMAIITGSQAAGQIF) threads the bilayer. Residues 1009 to 1299 (SYAPNMNSAK…LVNLQGLGEI (291 aa)) lie on the Cytoplasmic side of the membrane. Residues 1053 to 1293 (IEFRHVNFRY…NGWYAELVNL (241 aa)) form the ABC transporter 2 domain. 1088–1095 (GASGCGKS) lines the ATP pocket.

It belongs to the ABC transporter superfamily. ABCB family. Multidrug resistance exporter (TC 3.A.1.201) subfamily.

Its subcellular location is the cell membrane. Transports acidic acylated and non-acylated sophorolipids (SLs) into the extracellular space, where they can be lactonized by lactone esterase. This is Sophorolipid transporter (mdr) from Starmerella bombicola (Yeast).